We begin with the raw amino-acid sequence, 348 residues long: AT-hook motif nuclear-localized protein 9 (348 aa).

The interval 18 to 156 is disordered; sequence HRGLSGSGPP…MASVGELMPS (139 aa). Polar residues predominate over residues 31–46; that stretch reads GSPQQQQGLRHLPNQN. The span at 47–60 shows a compositional bias: low complexity; that stretch reads SPFGSGSTGFGSPS. The Bipartite nuclear localization signal signature appears at 98 to 106; the sequence is KRKRGRPRK. The a.T hook 1 DNA-binding region spans 98–110; it reads KRKRGRPRKYGQD. The segment covering 112-131 has biased composition (low complexity); the sequence is SVSLALSSSSVSTITPNNSN. The a.T hook 2 DNA-binding region spans 132–144; that stretch reads KRGRGRPPGSGKK. In terms of domain architecture, PPC spans 157–299; the sequence is SSGMSFTPHV…EEEASEVVQE (143 aa).

The protein resides in the nucleus. Its function is as follows. Transcription factor that specifically binds AT-rich DNA sequences related to the nuclear matrix attachment regions (MARs). This Arabidopsis thaliana (Mouse-ear cress) protein is AT-hook motif nuclear-localized protein 9.